The chain runs to 131 residues: Small ribosomal subunit protein uS8 (131 aa).

The protein belongs to the universal ribosomal protein uS8 family. In terms of assembly, part of the 30S ribosomal subunit. Contacts proteins S5 and S12.

In terms of biological role, one of the primary rRNA binding proteins, it binds directly to 16S rRNA central domain where it helps coordinate assembly of the platform of the 30S subunit. In Phocaeicola vulgatus (strain ATCC 8482 / DSM 1447 / JCM 5826 / CCUG 4940 / NBRC 14291 / NCTC 11154) (Bacteroides vulgatus), this protein is Small ribosomal subunit protein uS8.